A 413-amino-acid polypeptide reads, in one-letter code: Argininosuccinate synthase (413 aa).

ATP is bound by residues 14–22 (AYSGGLDTS) and A41. Positions 94 and 99 each coordinate L-citrulline. Position 124 (G124) interacts with ATP. L-aspartate contacts are provided by T126, N130, and D131. N130 is a binding site for L-citrulline. Residues R134, S185, S194, E270, and Y282 each coordinate L-citrulline.

Belongs to the argininosuccinate synthase family. Type 1 subfamily. Homotetramer.

The protein resides in the cytoplasm. It catalyses the reaction L-citrulline + L-aspartate + ATP = 2-(N(omega)-L-arginino)succinate + AMP + diphosphate + H(+). It participates in amino-acid biosynthesis; L-arginine biosynthesis; L-arginine from L-ornithine and carbamoyl phosphate: step 2/3. This Hyphomonas neptunium (strain ATCC 15444) protein is Argininosuccinate synthase.